Here is a 364-residue protein sequence, read N- to C-terminus: Coproporphyrin III ferrochelatase (364 aa).

Fe-coproporphyrin III is bound by residues arginine 29 and tyrosine 118. Fe(2+) is bound by residues histidine 169 and glutamate 250.

The protein belongs to the ferrochelatase family.

Its subcellular location is the cytoplasm. It carries out the reaction Fe-coproporphyrin III + 2 H(+) = coproporphyrin III + Fe(2+). It participates in porphyrin-containing compound metabolism; protoheme biosynthesis. In terms of biological role, involved in coproporphyrin-dependent heme b biosynthesis. Catalyzes the insertion of ferrous iron into coproporphyrin III to form Fe-coproporphyrin III. The sequence is that of Coproporphyrin III ferrochelatase from Streptococcus pneumoniae (strain Hungary19A-6).